The sequence spans 102 residues: Co-chaperonin GroES (102 aa).

This sequence belongs to the GroES chaperonin family. As to quaternary structure, heptamer of 7 subunits arranged in a ring. Interacts with the chaperonin GroEL.

It localises to the cytoplasm. In terms of biological role, together with the chaperonin GroEL, plays an essential role in assisting protein folding. The GroEL-GroES system forms a nano-cage that allows encapsulation of the non-native substrate proteins and provides a physical environment optimized to promote and accelerate protein folding. GroES binds to the apical surface of the GroEL ring, thereby capping the opening of the GroEL channel. The protein is Co-chaperonin GroES of Chlamydia felis (strain Fe/C-56) (Chlamydophila felis).